A 692-amino-acid polypeptide reads, in one-letter code: Proprotein convertase subtilisin/kexin type 9 (692 aa).

An N-terminal signal peptide occupies residues 1–30; it reads MGTVSSRRSWWPLPLLLLLLLLLGPAGARA. The propeptide occupies 31–152; it reads QEDEDGDYEE…IEEDSSVFAQ (122 aa). Y38 is subject to Sulfotyrosine. S47 is modified (phosphoserine). Positions 77 to 149 constitute an Inhibitor I9 domain; it reads TYVVVLKEET…VDYIEEDSSV (73 aa). A Peptidase S8 domain is found at 155–461; sequence PWNLERITPP…GWQLFCRTVW (307 aa). Active-site charge relay system residues include D186 and H226. Intrachain disulfides connect C223–C255 and C323–C358. S386 serves as the catalytic Charge relay system. Residues 450–692 form a C-terminal domain region; sequence GAGWQLFCRT…HLAQASQELQ (243 aa). 3 disulfide bridges follow: C457–C527, C477–C526, and C486–C509. N-linked (GlcNAc...) asparagine glycosylation occurs at N533. Cystine bridges form between C534/C601, C552/C600, C562/C588, C608/C679, C626/C678, and C635/C654. A Phosphoserine modification is found at S688.

This sequence belongs to the peptidase S8 family. As to quaternary structure, monomer. Can self-associate to form dimers and higher multimers which may have increased LDLR degrading activity. The precursor protein but not the mature protein may form multimers. Interacts with APOB, VLDLR, LRP8/APOER2 and BACE1. The full-length immature form (pro-PCSK9) interacts with SCNN1A, SCNN1B and SCNN1G. The pro-PCSK9 form (via C-terminal domain) interacts with LDLR. Interacts (via the C-terminal domain) with ANXA2 (via repeat Annexin 1); the interaction inhibits the degradation of LDLR. Ca(2+) serves as cofactor. Cleavage by furin and PCSK5 generates a truncated inactive protein that is unable to induce LDLR degradation. Post-translationally, undergoes autocatalytic cleavage in the endoplasmic reticulum to release the propeptide from the N-terminus and the cleavage of the propeptide is strictly required for its maturation and activation. The cleaved propeptide however remains associated with the catalytic domain through non-covalent interactions, preventing potential substrates from accessing its active site. As a result, it is secreted from cells as a propeptide-containing, enzymatically inactive protein. In terms of processing, phosphorylation protects the propeptide against proteolysis.

It localises to the cytoplasm. The protein resides in the secreted. The protein localises to the endosome. Its subcellular location is the lysosome. It is found in the cell surface. It localises to the endoplasmic reticulum. The protein resides in the golgi apparatus. Its proteolytic activity is autoinhibited by the non-covalent binding of the propeptide to the catalytic domain. Inhibited by EGTA. Functionally, crucial player in the regulation of plasma cholesterol homeostasis. Binds to low-density lipid receptor family members: low density lipoprotein receptor (LDLR), very low density lipoprotein receptor (VLDLR), apolipoprotein E receptor (LRP1/APOER) and apolipoprotein receptor 2 (LRP8/APOER2), and promotes their degradation in intracellular acidic compartments. Acts via a non-proteolytic mechanism to enhance the degradation of the hepatic LDLR through a clathrin LDLRAP1/ARH-mediated pathway. May prevent the recycling of LDLR from endosomes to the cell surface or direct it to lysosomes for degradation. Can induce ubiquitination of LDLR leading to its subsequent degradation. Inhibits intracellular degradation of APOB via the autophagosome/lysosome pathway in a LDLR-independent manner. Involved in the disposal of non-acetylated intermediates of BACE1 in the early secretory pathway. Inhibits epithelial Na(+) channel (ENaC)-mediated Na(+) absorption by reducing ENaC surface expression primarily by increasing its proteasomal degradation. Regulates neuronal apoptosis via modulation of LRP8/APOER2 levels and related anti-apoptotic signaling pathways. This Pan troglodytes (Chimpanzee) protein is Proprotein convertase subtilisin/kexin type 9 (PCSK9).